The chain runs to 371 residues: uncharacterized protein (371 aa).

8 consecutive transmembrane segments (helical) span residues 4–24 (LPML…FIYG), 60–82 (LIQL…ALYG), 87–109 (LWIV…MLSI), 130–150 (VFIN…FVAS), 197–217 (VVAV…LLPV), 224–244 (IYPL…YGLV), 282–302 (VPIW…GFHA), and 320–340 (FIFY…CMVG).

Belongs to the peptide transporter carbon starvation (CstA) (TC 2.A.114) family.

Its subcellular location is the cell membrane. This is an uncharacterized protein from Haemophilus influenzae (strain ATCC 51907 / DSM 11121 / KW20 / Rd).